Consider the following 2871-residue polypeptide: Fibrillin-1 (2871 aa).

Positions 1 to 24 (MRRGRLLEVALGFTVLLASYTSHR) are cleaved as a signal peptide. Positions 25–44 (AEANLEAGNGKETRASRAKR) are excised as a propeptide. A compositionally biased stretch (basic and acidic residues) spans 29–39 (LEAGNGKETRA). Positions 29 to 49 (LEAGNGKETRASRAKRRGGGG) are disordered. Residues 45–81 (RGGGGHDALKGPNVCGSRYNAYCCPGWKTLPGGNQCI) are fibrillin unique N-terminal (FUN) domain. Residues 45–450 (RGGGGHDALK…PPRVLPVNVT (406 aa)) form an N-terminal domain region. 11 cysteine pairs are disulfide-bonded: cysteine 59-cysteine 68, cysteine 67-cysteine 80, cysteine 85-cysteine 94, cysteine 89-cysteine 100, cysteine 102-cysteine 111, cysteine 119-cysteine 129, cysteine 123-cysteine 134, cysteine 136-cysteine 145, cysteine 150-cysteine 160, cysteine 154-cysteine 166, and cysteine 168-cysteine 177. EGF-like domains follow at residues 81–112 (IVPI…PSCG), 115–146 (SIQH…THCG), and 147–178 (QPVC…PQCE). Residues 119-329 (CNIRCMNGGS…YTSPDGTRCI (211 aa)) are interaction with MFAP4. One can recognise a TB 1 domain in the interval 184-236 (GPCFTVVSNQMCQGQLSGIVCTKTLCCATVGRAWGHPCEMCPAQPHPCRRGFI). A hybrid domain 1 region spans residues 195 to 221 (CQGQLSGIVCTKTLCCATVGRAWGHPC). The 42-residue stretch at 246–287 (DVDECQAIPGLCQGGNCINTVGSFECKCPAGHKFNEVSQKCE) folds into the EGF-like 4; calcium-binding domain. Disulfide bonds link cysteine 250–cysteine 262, cysteine 257–cysteine 271, cysteine 273–cysteine 286, cysteine 292–cysteine 304, cysteine 299–cysteine 313, and cysteine 315–cysteine 328. Residue serine 268 is glycosylated (O-linked (Glc) serine). The 42-residue stretch at 288-329 (DIDECSTIPGICDGGECTNTVSSYFCKCPPGFYTSPDGTRCI) folds into the EGF-like 5; calcium-binding domain. One can recognise a TB 2 domain in the interval 334 to 389 (GYCYTALTNGRCSNQLPQSITKMQCCCDVGRCWSPGVTVTPEMCPIRATEDFNKLC). A glycan (N-linked (GlcNAc...) asparagine) is linked at asparagine 448. The 41-residue stretch at 449 to 489 (VTDYCQLFRYLCHNGRCIPTPGSYRCECNKGFQLDLRGECI) folds into the EGF-like 6 domain. 15 cysteine pairs are disulfide-bonded: cysteine 453–cysteine 465, cysteine 460–cysteine 474, cysteine 476–cysteine 488, cysteine 494–cysteine 504, cysteine 499–cysteine 513, cysteine 515–cysteine 528, cysteine 534–cysteine 546, cysteine 541–cysteine 555, cysteine 557–cysteine 570, cysteine 576–cysteine 587, cysteine 582–cysteine 596, cysteine 598–cysteine 611, cysteine 617–cysteine 628, cysteine 623–cysteine 637, and cysteine 639–cysteine 652. The O-linked (Glc) serine glycan is linked to serine 471. Positions 490-529 (DVDECEKNPCAGGECINNQGSYTCQCRPGYQSTLTRTECR) constitute an EGF-like 7; calcium-binding domain. An O-linked (Glc) serine glycan is attached at serine 510. The EGF-like 8; calcium-binding domain occupies 530–571 (DIDECLQNGRICNNGRCINTDGSFHCVCNAGFHVTRDGKNCE). The region spanning 572–612 (DMDECSIRNMCLNGMCINEDGSFKCICKPGFQLASDGRYCK) is the EGF-like 9; calcium-binding domain. The 41-residue stretch at 613-653 (DINECETSGICMNGRCVNTDGSYRCECFPGLAVGLDGRVCV) folds into the EGF-like 10; calcium-binding domain. In terms of domain architecture, TB 3 spans 659 to 711 (STCYGGYKRGQCVKPLFGAVTKSECCCASTEYAFGEPCQPCPSQNSAEYQALC). An EGF-like 11; calcium-binding domain is found at 723 to 764 (DINECALDPDICPNGICENLRGTYKCICNSGYEVDSTGKNCV). Intrachain disulfides connect cysteine 727–cysteine 739, cysteine 734–cysteine 748, cysteine 750–cysteine 763, cysteine 769–cysteine 781, cysteine 776–cysteine 790, cysteine 792–cysteine 805, cysteine 811–cysteine 821, cysteine 816–cysteine 830, cysteine 832–cysteine 845, cysteine 853–cysteine 875, cysteine 862–cysteine 887, cysteine 876–cysteine 890, cysteine 896–cysteine 908, cysteine 914–cysteine 926, cysteine 921–cysteine 935, and cysteine 937–cysteine 950. An EGF-like 12; calcium-binding domain is found at 765–806 (DINECVLNSLLCDNGQCRNTPGSFVCTCPKGFIYKPDLKTCE). Residues 807-846 (DIDECESSPCINGVCKNSPGSFICECSSESTLDPTKTICI) form the EGF-like 13; calcium-binding domain. Residues 851–902 (GTCWQTIIDGRCEININGATLKSQCCSSLGAAWGSPCTPCQVDPICGKGYSR) enclose the TB 4 domain. The segment at 862–887 (CEININGATLKSQCCSSLGAAWGSPC) is hybrid domain 2. Residues 910 to 951 (DIDECEVFPGVCKNGLCVNSKGSFKCQCPNGMTLDATGRICL) form the EGF-like 14; calcium-binding domain. A TB 5 domain is found at 956–1008 (ETCFLRYEDEECTLPVVGRHRMDACCCSVGAAWGTEECEECPPRNTPEYEELC). The region spanning 1028 to 1069 (DINECKMIPNLCTHGKCRNTIGSFKCRCDSGFALDSEERNCI) is the EGF-like 15; calcium-binding domain. Disulfide bonds link cysteine 1032–cysteine 1044, cysteine 1039–cysteine 1053, cysteine 1055–cysteine 1068, cysteine 1074–cysteine 1086, cysteine 1081–cysteine 1095, cysteine 1097–cysteine 1111, cysteine 1117–cysteine 1129, cysteine 1124–cysteine 1138, cysteine 1140–cysteine 1153, cysteine 1159–cysteine 1171, cysteine 1201–cysteine 1212, cysteine 1208–cysteine 1221, cysteine 1223–cysteine 1236, cysteine 1242–cysteine 1254, cysteine 1249–cysteine 1263, cysteine 1265–cysteine 1278, cysteine 1284–cysteine 1296, cysteine 1291–cysteine 1305, cysteine 1307–cysteine 1320, cysteine 1326–cysteine 1339, cysteine 1333–cysteine 1348, cysteine 1350–cysteine 1361, cysteine 1367–cysteine 1380, cysteine 1374–cysteine 1389, cysteine 1391–cysteine 1402, cysteine 1408–cysteine 1420, cysteine 1415–cysteine 1429, cysteine 1450–cysteine 1461, cysteine 1456–cysteine 1470, cysteine 1472–cysteine 1485, cysteine 1491–cysteine 1502, cysteine 1497–cysteine 1511, cysteine 1513–cysteine 1526, cysteine 1534–cysteine 1562, cysteine 1549–cysteine 1574, cysteine 1563–cysteine 1577, cysteine 1564–cysteine 1589, cysteine 1610–cysteine 1622, cysteine 1617–cysteine 1631, cysteine 1633–cysteine 1646, cysteine 1652–cysteine 1663, cysteine 1658–cysteine 1672, and cysteine 1674–cysteine 1687. The region spanning 1070 to 1112 (DIDECRISPDLCGRGQCVNTPGDFECKCDEGYESGFMMMKNCM) is the EGF-like 16; calcium-binding domain. The region spanning 1113-1154 (DIDECQRDPLLCRGGVCLNTEGSYRCECPSGHQMSPNISACI) is the EGF-like 17; calcium-binding domain. Serine 1135 carries O-linked (Glc) serine glycosylation. Asparagine 1149 carries N-linked (GlcNAc...) asparagine glycosylation. An EGF-like 18; calcium-binding domain is found at 1155 to 1196 (DINECELSAHLCPHGRCVNLIGKYQRARNPGYHSTPDRLFCV). Residues 1197–1237 (DIDECSIMNGGCETFCTNSEGSYECSCQPGFALMPDQRSCT) enclose the EGF-like 19; calcium-binding domain. An O-linked (Glc) serine glycan is attached at serine 1218. Positions 1238–1279 (DIDECEDNPNICDGGQCTNIPGEYRCLCYDGFMASEDMKTCV) constitute an EGF-like 20; calcium-binding domain. The EGF-like 21; calcium-binding domain occupies 1280–1321 (DVNECDLNPNICLSGTCENTKGSFICHCDMGYSGKKGKTGCT). O-linked (Glc) serine glycosylation occurs at serine 1302. Residues 1322–1362 (DINECEIGAHNCDRHAVCTNTAGSFNCSCSPGWIGDGIKCT) enclose the EGF-like 22; calcium-binding domain. The O-linked (Glc) serine glycan is linked to serine 1345. A glycan (N-linked (GlcNAc...) asparagine) is linked at asparagine 1347. Residues 1363–1403 (DLDECSNGTHMCSQHADCKNTMGSYRCLCKEGYTGDGFTCA) enclose the EGF-like 23; calcium-binding domain. A glycan (N-linked (GlcNAc...) asparagine) is linked at asparagine 1369. An O-linked (Glc) serine glycan is attached at serine 1386. In terms of domain architecture, EGF-like 24; calcium-binding spans 1404–1445 (DLDECSENVKLCGNVQCLYAPGGYHCEYDMGFVPSADRKSCV). In terms of domain architecture, EGF-like 25; calcium-binding spans 1446 to 1486 (DSDECSLPNICVFGTCHNLPGLFRCECEIGYELDRSGGNCT). Asparagine 1484 is a glycosylation site (N-linked (GlcNAc...) asparagine). The region spanning 1487 to 1527 (DVNECLEPPTCISGNCVNTPGSYTCVCPPDFELNPTRVGCV) is the EGF-like 26; calcium-binding domain. Serine 1508 carries an O-linked (Glc) serine glycan. Positions 1528–2731 (DTRSGNCYLD…GYPKRGRKRR (1204 aa)) are C-terminal domain. Residues 1532 to 1589 (GNCYLDVRPRGDNGDTACSNEIGVGVSKASCCCSLGKAWGTPCEQCPPVNTSEYKILC) form the TB 6 domain. The short motif at 1541–1543 (RGD) is the Cell attachment site element. The N-linked (GlcNAc...) asparagine glycan is linked to asparagine 1581. In terms of domain architecture, EGF-like 27; calcium-binding spans 1606 to 1647 (DIDECQELPGLCQGGKCINTFGSFQCRCPTGYYLNEDTRVCD). The O-linked (Glc) serine glycan is linked to serine 1628. In terms of domain architecture, EGF-like 28; calcium-binding spans 1648–1688 (DVNECETPGICGPGTCYNTVGNYTCICPPDYMQVNGGNNCM). N-linked (GlcNAc...) asparagine glycosylation occurs at asparagine 1669. In terms of domain architecture, TB 7 spans 1693–1748 (SLCYRNYYADNQTCDGELLFNMTKKMCCCSYNIGRAWNKPCEQCPIPSTDEFATLC). Residues asparagine 1703 and asparagine 1713 are each glycosylated (N-linked (GlcNAc...) asparagine). The EGF-like 29; calcium-binding domain occupies 1766 to 1807 (DIDECREIPGVCENGVCINMVGSFRCECPVGFFYNDKLLVCE). 40 disulfides stabilise this stretch: cysteine 1770–cysteine 1782, cysteine 1777–cysteine 1791, cysteine 1793–cysteine 1806, cysteine 1812–cysteine 1824, cysteine 1818–cysteine 1833, cysteine 1835–cysteine 1847, cysteine 1853–cysteine 1865, cysteine 1860–cysteine 1874, cysteine 1876–cysteine 1889, cysteine 1895–cysteine 1905, cysteine 1900–cysteine 1914, cysteine 1916–cysteine 1928, cysteine 1934–cysteine 1947, cysteine 1942–cysteine 1956, cysteine 1958–cysteine 1971, cysteine 1977–cysteine 1989, cysteine 1984–cysteine 1998, cysteine 2000–cysteine 2011, cysteine 2017–cysteine 2029, cysteine 2024–cysteine 2038, cysteine 2040–cysteine 2053, cysteine 2061–cysteine 2083, cysteine 2070–cysteine 2096, cysteine 2084–cysteine 2099, cysteine 2085–cysteine 2111, cysteine 2131–cysteine 2142, cysteine 2137–cysteine 2151, cysteine 2153–cysteine 2164, cysteine 2170–cysteine 2181, cysteine 2176–cysteine 2190, cysteine 2192–cysteine 2204, cysteine 2210–cysteine 2221, cysteine 2217–cysteine 2230, cysteine 2232–cysteine 2245, cysteine 2251–cysteine 2265, cysteine 2258–cysteine 2274, cysteine 2276–cysteine 2289, cysteine 2295–cysteine 2307, cysteine 2302–cysteine 2316, and cysteine 2318–cysteine 2331. One can recognise an EGF-like 30; calcium-binding domain in the interval 1808-1848 (DIDECQNGPVCQRNAECINTAGSYRCDCKPGYRFTSTGQCN). A glycan (O-linked (Glc) serine) is linked at serine 1830. One can recognise an EGF-like 31; calcium-binding domain in the interval 1849-1890 (DRNECQEIPNICSHGQCIDTVGSFYCLCHTGFKTNADQTMCL). An O-linked (Glc) serine glycan is attached at serine 1871. One can recognise an EGF-like 32; calcium-binding domain in the interval 1891–1929 (DINECERDACGNGTCRNTIGSFNCRCNHGFILSHNNDCI). Asparagine 1902 carries an N-linked (GlcNAc...) asparagine glycan. Serine 1911 carries an O-linked (Glc) serine glycan. The EGF-like 33; calcium-binding domain occupies 1930–1972 (DVDECATGNGNLCRNGQCINTVGSFQCQCNEGYEVAPDGRTCV). O-linked (Glc) serine glycosylation is present at serine 1953. Residues 1973 to 2012 (DINECLLEPGKCAPGTCQNLDGSYRCICPPGYSLQNDKCE) enclose the EGF-like 34; calcium-binding domain. The 42-residue stretch at 2013-2054 (DIDECVEEPEICALGTCSNTEGSFKCLCPDGFSLSSTGRRCQ) folds into the EGF-like 35; calcium-binding domain. A glycan (O-linked (Glc) serine) is linked at serine 2035. The TB 8 domain maps to 2059 to 2111 (SYCYAKFEGGKCSSPKSRNHSKQECCCALKGEGWGDPCELCPTEPDEAFRQIC). N-linked (GlcNAc...) asparagine glycosylation is present at asparagine 2077. The EGF-like 36; calcium-binding domain maps to 2127–2165 (DMDECKEPDVCKHGQCINTDGSYRCECPFGYILEGNECV). Residue serine 2148 is glycosylated (O-linked (Glc) serine). The EGF-like 37; calcium-binding domain maps to 2166–2205 (DTDECSVGNPCGNGTCKNVIGGFECTCEEGFEPGPMMTCE). Asparagine 2178 carries N-linked (GlcNAc...) asparagine glycosylation. The EGF-like 38; calcium-binding domain maps to 2206–2246 (DINECAQNPLLCAFRCVNTYGSYECKCPTGYVLREDRRMCK). An O-linked (Glc) serine glycan is attached at serine 2227. One can recognise an EGF-like 39; calcium-binding domain in the interval 2247 to 2290 (DEDECEEGKHDCAEKQMECKNLIGMYICICGPGYQRRPDGEGCV). In terms of domain architecture, EGF-like 40; calcium-binding spans 2291 to 2332 (DENECQTKPGICENGRCLNTRGSYTCECNDGFTASPTQDECL). O-linked (Glc) serine glycosylation occurs at serine 2313. A TB 9 domain is found at 2337 to 2390 (GYCFTEVLQNMCQIGSSNRNPVTKSECCCDGGRGWGPHCEICPFQGTVAFKKLC). The 42-residue stretch at 2402–2443 (DIDECKVIHDVCRNGECINDRGSYHCICKTGYTPDITGTACV) folds into the EGF-like 41; calcium-binding domain. 21 disulfide bridges follow: cysteine 2406-cysteine 2418, cysteine 2413-cysteine 2427, cysteine 2429-cysteine 2442, cysteine 2448-cysteine 2459, cysteine 2455-cysteine 2468, cysteine 2470-cysteine 2483, cysteine 2489-cysteine 2500, cysteine 2496-cysteine 2509, cysteine 2511-cysteine 2522, cysteine 2528-cysteine 2541, cysteine 2535-cysteine 2550, cysteine 2552-cysteine 2565, cysteine 2571-cysteine 2581, cysteine 2577-cysteine 2590, cysteine 2592-cysteine 2605, cysteine 2611-cysteine 2622, cysteine 2617-cysteine 2631, cysteine 2633-cysteine 2646, cysteine 2652-cysteine 2663, cysteine 2659-cysteine 2672, and cysteine 2674-cysteine 2686. Residues 2444 to 2484 (DLNECNQAPKPCNFICKNTEGSYQCSCPKGYILQEDGRSCK) form the EGF-like 42; calcium-binding domain. Residue serine 2465 is glycosylated (O-linked (Glc) serine). An EGF-like 43; calcium-binding domain is found at 2485–2523 (DLDECATKQHNCQFLCVNTIGSFACKCPPGFTQHHTACI). Positions 2524–2566 (DNNECTSDINLCGAKGICQNTPGSFTCECQRGFSLDQSGASCE) constitute an EGF-like 44; calcium-binding domain. Serine 2547 is a glycosylation site (O-linked (Glc) serine). An EGF-like 45; calcium-binding domain is found at 2567–2606 (DVDECEGNHRCQHGCQNIIGGYRCSCPQGYLQHYQWNQCV). One can recognise an EGF-like 46; calcium-binding domain in the interval 2607–2647 (DENECLSAHICGGASCHNTLGSYKCMCPAGFQYEQFSGGCQ). O-linked (Glc) serine glycosylation is present at serine 2628. The 40-residue stretch at 2648–2687 (DINECGSSQAPCSYGCSNTEGGYLCGCPPGYFRIGQGHCV) folds into the EGF-like 47; calcium-binding domain. A phosphoserine mark is found at serine 2702 and serine 2709. Residues asparagine 2734, asparagine 2750, and asparagine 2767 are each glycosylated (N-linked (GlcNAc...) asparagine).

It belongs to the fibrillin family. Interacts with COL16A1. Interacts with integrin alpha-V/beta-3. Interacts with ADAMTS10; this interaction promotes microfibril assembly. Interacts with THSD4; this interaction promotes fibril formation. Interacts (via N-terminal domain) with FBLN2 and FBLN5. Interacts with ELN. Forms a ternary complex with ELN and FBLN2 or FBLN5 and a significant interaction with ELN seen only in the presence of FBLN2 or FBLN5. Interacts (via N-terminal domain) with LTBP2 (via C-terminal domain) in a Ca(+2)-dependent manner. Interacts (via N-terminal domain) with LTBP1 (via C-terminal domain). Interacts with integrins ITGA5:ITGB1, ITGAV:ITGB3 and ITGAV:ITGB6. Interacts (via N-terminal domain) with BMP2, BMP4, BMP7, BMP10 and GDF5. Interacts (via N-terminal domain) with MFAP2 and MFAP5. Interacts with ADAMTSL5. Interacts with MFAP4. Interacts (via N-terminal domain) with TNFSF11 in a Ca(+2)-dependent manner. Interacts (via N-terminal domain) with EFEMP2; this interaction inhibits EFEMP2 binding to LOX and ELN. Post-translationally, cleavage of N- and C-terminus by furin is required for incorporation into the extracellular matrix and assembly into microfibrils. The C-terminus, which corresponds to the Asprosin chain, was initially thought to constitute a propeptide. Fibrillin-1 and Asprosin chains are still linked together during the secretion from cells, but are subsequently separated by furin, an essential step for incorporation of Fibrillin-1 into the nascent microfibrils. In terms of processing, forms intermolecular disulfide bonds either with other fibrillin-1 molecules or with other components of the microfibrils. O-glycosylated on serine residues by POGLUT2 and POGLUT3 which is necessary for efficient protein secretion.

The protein localises to the secreted. Its subcellular location is the extracellular space. The protein resides in the extracellular matrix. Structural component of the 10-12 nm diameter microfibrils of the extracellular matrix, which conveys both structural and regulatory properties to load-bearing connective tissues. Fibrillin-1-containing microfibrils provide long-term force bearing structural support. In tissues such as the lung, blood vessels and skin, microfibrils form the periphery of the elastic fiber, acting as a scaffold for the deposition of elastin. In addition, microfibrils can occur as elastin-independent networks in tissues such as the ciliary zonule, tendon, cornea and glomerulus where they provide tensile strength and have anchoring roles. Fibrillin-1 also plays a key role in tissue homeostasis through specific interactions with growth factors, such as the bone morphogenetic proteins (BMPs), growth and differentiation factors (GDFs) and latent transforming growth factor-beta-binding proteins (LTBPs), cell-surface integrins and other extracellular matrix protein and proteoglycan components. Regulates osteoblast maturation by controlling TGF-beta bioavailability and calibrating TGF-beta and BMP levels, respectively. Negatively regulates osteoclastogenesis by binding and sequestering an osteoclast differentiation and activation factor TNFSF11. This leads to disruption of TNFSF11-induced Ca(2+) signaling and impairment of TNFSF11-mediated nuclear translocation and activation of transcription factor NFATC1 which regulates genes important for osteoclast differentiation and function. Mediates cell adhesion via its binding to cell surface receptors integrins ITGAV:ITGB3 and ITGA5:ITGB1. Binds heparin and this interaction plays an important role in the assembly of microfibrils. In terms of biological role, hormone that targets the liver to increase plasma glucose levels. Secreted by white adipose tissue and circulates in the plasma. Acts in response to fasting and promotes blood glucose elevation by binding to the surface of hepatocytes. Promotes hepatocyte glucose release by activating the protein kinase A activity in the liver, resulting in rapid glucose release into the circulation. The chain is Fibrillin-1 from Sus scrofa (Pig).